A 331-amino-acid chain; its full sequence is Methionyl-tRNA formyltransferase (331 aa).

S110–P113 serves as a coordination point for (6S)-5,6,7,8-tetrahydrofolate. The interval H312 to P331 is disordered.

It belongs to the Fmt family.

The catalysed reaction is L-methionyl-tRNA(fMet) + (6R)-10-formyltetrahydrofolate = N-formyl-L-methionyl-tRNA(fMet) + (6S)-5,6,7,8-tetrahydrofolate + H(+). Attaches a formyl group to the free amino group of methionyl-tRNA(fMet). The formyl group appears to play a dual role in the initiator identity of N-formylmethionyl-tRNA by promoting its recognition by IF2 and preventing the misappropriation of this tRNA by the elongation apparatus. The sequence is that of Methionyl-tRNA formyltransferase from Frankia alni (strain DSM 45986 / CECT 9034 / ACN14a).